A 141-amino-acid polypeptide reads, in one-letter code: Histone H2B (141 aa).

Residues 1–10 (MAPKAAEKKP) are compositionally biased toward basic and acidic residues. Positions 1 to 49 (MAPKAAEKKPSTGGKAPAGGKAPAEKKEAGKKTAAAASGDKKKRGKTRK) are disordered. Residues lysine 8 and lysine 9 each carry the N6-acetyllysine; alternate modification. Glycyl lysine isopeptide (Lys-Gly) (interchain with G-Cter in SUMO); alternate cross-links involve residues lysine 8 and lysine 9. Over residues 11–22 (STGGKAPAGGKA) the composition is skewed to low complexity. Lysine 15 carries the N6-acetyllysine modification. Lysine 26 bears the N6-acetyllysine; alternate mark. Lysine 26 participates in a covalent cross-link: Glycyl lysine isopeptide (Lys-Gly) (interchain with G-Cter in SUMO); alternate. Residue lysine 27 forms a Glycyl lysine isopeptide (Lys-Gly) (interchain with G-Cter in SUMO) linkage. Lysine 135 participates in a covalent cross-link: Glycyl lysine isopeptide (Lys-Gly) (interchain with G-Cter in ubiquitin).

The protein belongs to the histone H2B family. In terms of assembly, the nucleosome is a histone octamer containing two molecules each of H2A, H2B, H3 and H4 assembled in one H3-H4 heterotetramer and two H2A-H2B heterodimers. The octamer wraps approximately 147 bp of DNA. Monoubiquitinated by the ubc2-bre1 complex to form H2BK123ub1. H2BK123ub1 gives a specific tag for epigenetic transcriptional activation and is also prerequisite for H3K4me and H3K79me formation. H2BK123ub1 also modulates the formation of double-strand breaks during meiosis and is a prerequisite for DNA-damage checkpoint activation. In terms of processing, acetylated by gcn5 to form H2BK11ac and H2BK16ac. H2BK16ac can also be formed by esa1. Acetylation of N-terminal lysines and particularly formation of H2BK11acK16ac has a positive effect on transcription. Post-translationally, sumoylation to form H2BK6su or H2BK7su, and probably also H2BK16su or H2BK17su, occurs preferentially near the telomeres and represses gene transcription.

It localises to the nucleus. It is found in the chromosome. Functionally, core component of nucleosome. Nucleosomes wrap and compact DNA into chromatin, limiting DNA accessibility to the cellular machineries which require DNA as a template. Histones thereby play a central role in transcription regulation, DNA repair, DNA replication and chromosomal stability. DNA accessibility is regulated via a complex set of post-translational modifications of histones, also called histone code, and nucleosome remodeling. The polypeptide is Histone H2B (htb1) (Aspergillus oryzae (strain ATCC 42149 / RIB 40) (Yellow koji mold)).